The chain runs to 478 residues: Pentraxin-4 (478 aa).

A signal peptide spans 1–25 (MGCSWRKTLSFFLVFVPIYLHGASS). N-linked (GlcNAc...) asparagine glycans are attached at residues Asn67 and Asn91. Residues 208 to 222 (RDRQELRAASEHRGP) show a composition bias toward basic and acidic residues. Residues 208–262 (RDRQELRAASEHRGPPQDSSAPLQGRREPPASGSHRVLSGTAPKDPRQQAWSPQV) form a disordered region. The 205-residue stretch at 269-473 (VGPTLVFPNA…GFVQGANCTC (205 aa)) folds into the Pentraxin (PTX) domain. A disulfide bridge links Cys300 with Cys364. Residues Asp322, Asn323, Glu406, Gln407, and Asp408 each contribute to the Ca(2+) site.

Ca(2+) serves as cofactor. In terms of tissue distribution, widely expressed at low levels with highest levels in small intestine, testis and brain. Very low expression in endothelial cells, monocytes, neutrophils and lymphocytes. Isoform 1 is not expressed in small intestine.

The protein localises to the secreted. The sequence is that of Pentraxin-4 (PTX4) from Homo sapiens (Human).